Consider the following 122-residue polypeptide: Large ribosomal subunit protein uL14 (122 aa).

This sequence belongs to the universal ribosomal protein uL14 family. As to quaternary structure, part of the 50S ribosomal subunit. Forms a cluster with proteins L3 and L19. In the 70S ribosome, L14 and L19 interact and together make contacts with the 16S rRNA in bridges B5 and B8.

Functionally, binds to 23S rRNA. Forms part of two intersubunit bridges in the 70S ribosome. This Borrelia recurrentis (strain A1) protein is Large ribosomal subunit protein uL14.